The primary structure comprises 274 residues: Large ribosomal subunit protein uL2cz/uL2cy (274 aa).

Disordered regions lie at residues 1 to 23 (MAIHLYKTSTPSTRNGTVGSQVK) and 223 to 274 (MNPV…RRSK). The span at 7 to 23 (KTSTPSTRNGTVGSQVK) shows a compositional bias: polar residues.

The protein belongs to the universal ribosomal protein uL2 family. Part of the 50S ribosomal subunit.

Its subcellular location is the plastid. The protein resides in the chloroplast. The polypeptide is Large ribosomal subunit protein uL2cz/uL2cy (rpl2-A) (Nandina domestica (Heavenly bamboo)).